The primary structure comprises 494 residues: Protein DETOXIFICATION 23 (494 aa).

The segment at 1–25 (MARREGEVTETLLKKSTENRGEDRD) is disordered. 12 consecutive transmembrane segments (helical) span residues 40–60 (LWVVAGPAIFTRFSTSGLSLI), 74–94 (AAYSITLTVLLRFSNGILLGM), 123–143 (IVLTGCTICLMPIYIFAGPIL), 158–178 (IIALWVIGINISFVPSFTCQM), 188–208 (IIAYVAAVSLGVHVFLSWLLV), 223–243 (LVAHWLPNIAQVLFVTCGGCT), 268–288 (GGMICLELWYNSILILLTGNL), 297–317 (ALAICININALEMMVAFGFMA), 340–360 (MVVVSTSLSIGIIFFFIFLFL), 384–404 (LLAFSILLNSIQPVLSGVAVG), 416–436 (LACYYLVGIPSGLFLGYVVGL), and 441–461 (VWLGMIFGIFVQTCVLTVMTM).

Belongs to the multi antimicrobial extrusion (MATE) (TC 2.A.66.1) family.

Its subcellular location is the membrane. The protein is Protein DETOXIFICATION 23 of Arabidopsis thaliana (Mouse-ear cress).